The primary structure comprises 205 residues: ATP phosphoribosyltransferase (205 aa).

The protein belongs to the ATP phosphoribosyltransferase family. Short subfamily. Heteromultimer composed of HisG and HisZ subunits.

The protein localises to the cytoplasm. The enzyme catalyses 1-(5-phospho-beta-D-ribosyl)-ATP + diphosphate = 5-phospho-alpha-D-ribose 1-diphosphate + ATP. Its pathway is amino-acid biosynthesis; L-histidine biosynthesis; L-histidine from 5-phospho-alpha-D-ribose 1-diphosphate: step 1/9. Functionally, catalyzes the condensation of ATP and 5-phosphoribose 1-diphosphate to form N'-(5'-phosphoribosyl)-ATP (PR-ATP). Has a crucial role in the pathway because the rate of histidine biosynthesis seems to be controlled primarily by regulation of HisG enzymatic activity. The protein is ATP phosphoribosyltransferase of Vesicomyosocius okutanii subsp. Calyptogena okutanii (strain HA).